The following is a 170-amino-acid chain: Lipoprotein signal peptidase (170 aa).

The next 2 helical transmembrane spans lie at 71-91 and 97-116; these read YFFI…ILEN and AIAY…DRVF. Residues aspartate 122 and aspartate 140 contribute to the active site. The chain crosses the membrane as a helical span at residues 131-151; sequence WHWPAFNLADIAIVLGALLFV.

Belongs to the peptidase A8 family.

Its subcellular location is the cell inner membrane. It catalyses the reaction Release of signal peptides from bacterial membrane prolipoproteins. Hydrolyzes -Xaa-Yaa-Zaa-|-(S,diacylglyceryl)Cys-, in which Xaa is hydrophobic (preferably Leu), and Yaa (Ala or Ser) and Zaa (Gly or Ala) have small, neutral side chains.. It functions in the pathway protein modification; lipoprotein biosynthesis (signal peptide cleavage). In terms of biological role, this protein specifically catalyzes the removal of signal peptides from prolipoproteins. The polypeptide is Lipoprotein signal peptidase (Serratia marcescens).